The chain runs to 494 residues: tRNA-2-methylthio-N(6)-dimethylallyladenosine synthase (494 aa).

One can recognise an MTTase N-terminal domain in the interval 5–121 (RTYQVRTYGC…LPALLERARV (117 aa)). C14, C50, C84, C158, C162, and C165 together coordinate [4Fe-4S] cluster. The Radical SAM core domain maps to 144-374 (RESVYAAWVA…LELQERISEE (231 aa)). Residues 377 to 446 (AKFVGREVEV…PHHLVADSGI (70 aa)) enclose the TRAM domain. The segment covering 458–468 (WEARNAPERRP) has biased composition (basic and acidic residues). Positions 458–494 (WEARNAPERRPTGVLLGMPKVGAPEPQPSVVGGCCDS) are disordered.

Belongs to the methylthiotransferase family. MiaB subfamily. As to quaternary structure, monomer. The cofactor is [4Fe-4S] cluster.

The protein localises to the cytoplasm. It carries out the reaction N(6)-dimethylallyladenosine(37) in tRNA + (sulfur carrier)-SH + AH2 + 2 S-adenosyl-L-methionine = 2-methylsulfanyl-N(6)-dimethylallyladenosine(37) in tRNA + (sulfur carrier)-H + 5'-deoxyadenosine + L-methionine + A + S-adenosyl-L-homocysteine + 2 H(+). Its function is as follows. Catalyzes the methylthiolation of N6-(dimethylallyl)adenosine (i(6)A), leading to the formation of 2-methylthio-N6-(dimethylallyl)adenosine (ms(2)i(6)A) at position 37 in tRNAs that read codons beginning with uridine. This chain is tRNA-2-methylthio-N(6)-dimethylallyladenosine synthase, found in Thermobifida fusca (strain YX).